The sequence spans 158 residues: MQGPLSAWLVKRRLVHRSLGFDYQGIETLEIKSEDWHSVAVILYVYGYNYLRSQCAYDVAPGGLLASVYHFTRIEYGIDQPEEVCIKVFLARSNPRIPSIFWVWKSADFQERESYDMLGISYDNHPRLKRILMPESWIGWPLRKDYIAPNFYEIQDAH.

This sequence belongs to the complex I 30 kDa subunit family. In terms of assembly, NDH is composed of at least 16 different subunits, 5 of which are encoded in the nucleus.

Its subcellular location is the plastid. The protein resides in the chloroplast thylakoid membrane. It catalyses the reaction a plastoquinone + NADH + (n+1) H(+)(in) = a plastoquinol + NAD(+) + n H(+)(out). The enzyme catalyses a plastoquinone + NADPH + (n+1) H(+)(in) = a plastoquinol + NADP(+) + n H(+)(out). Functionally, NDH shuttles electrons from NAD(P)H:plastoquinone, via FMN and iron-sulfur (Fe-S) centers, to quinones in the photosynthetic chain and possibly in a chloroplast respiratory chain. The immediate electron acceptor for the enzyme in this species is believed to be plastoquinone. Couples the redox reaction to proton translocation, and thus conserves the redox energy in a proton gradient. The chain is NAD(P)H-quinone oxidoreductase subunit J, chloroplastic from Pelargonium hortorum (Common geranium).